A 121-amino-acid chain; its full sequence is Large ribosomal subunit protein bL12 (121 aa).

It belongs to the bacterial ribosomal protein bL12 family. In terms of assembly, homodimer. Part of the ribosomal stalk of the 50S ribosomal subunit. Forms a multimeric L10(L12)X complex, where L10 forms an elongated spine to which 2 to 4 L12 dimers bind in a sequential fashion. Binds GTP-bound translation factors.

Functionally, forms part of the ribosomal stalk which helps the ribosome interact with GTP-bound translation factors. Is thus essential for accurate translation. In Ureaplasma urealyticum serovar 10 (strain ATCC 33699 / Western), this protein is Large ribosomal subunit protein bL12.